The chain runs to 287 residues: F420-non-reducing hydrogenase vhu subunit G (287 aa).

Belongs to the [NiFe]/[NiFeSe] hydrogenase small subunit family. As to quaternary structure, the F420-non-reducing hydrogenase vhu is composed of four subunits; VhuA, VhuD, VhuG and VhuU.

This chain is F420-non-reducing hydrogenase vhu subunit G (vhuG), found in Methanococcus voltae.